Consider the following 227-residue polypeptide: Orotate phosphoribosyltransferase (227 aa).

Lys26 contributes to the 5-phospho-alpha-D-ribose 1-diphosphate binding site. 34–35 (FF) is a binding site for orotate. Residues 72–73 (YK), Arg98, Lys99, Lys102, His104, and 123–131 (DDVVSAGLS) contribute to the 5-phospho-alpha-D-ribose 1-diphosphate site. Residues Ser127 and Arg155 each contribute to the orotate site.

Belongs to the purine/pyrimidine phosphoribosyltransferase family. PyrE subfamily. As to quaternary structure, homodimer. Mg(2+) serves as cofactor.

It catalyses the reaction orotidine 5'-phosphate + diphosphate = orotate + 5-phospho-alpha-D-ribose 1-diphosphate. The protein operates within pyrimidine metabolism; UMP biosynthesis via de novo pathway; UMP from orotate: step 1/2. Functionally, catalyzes the transfer of a ribosyl phosphate group from 5-phosphoribose 1-diphosphate to orotate, leading to the formation of orotidine monophosphate (OMP). In Nitrosomonas europaea (strain ATCC 19718 / CIP 103999 / KCTC 2705 / NBRC 14298), this protein is Orotate phosphoribosyltransferase.